Consider the following 551-residue polypeptide: UvrABC system protein C (551 aa).

In terms of domain architecture, GIY-YIG spans 12–87 (EKPGVYIFKN…IFKHKPKYNI (76 aa)). In terms of domain architecture, UVR spans 193–228 (EFVKDYIEQKMNYHSKMLDFENAAKYRDLLLSFEKL).

Belongs to the UvrC family. Interacts with UvrB in an incision complex.

The protein resides in the cytoplasm. Its function is as follows. The UvrABC repair system catalyzes the recognition and processing of DNA lesions. UvrC both incises the 5' and 3' sides of the lesion. The N-terminal half is responsible for the 3' incision and the C-terminal half is responsible for the 5' incision. This is UvrABC system protein C from Thermosipho africanus (strain TCF52B).